The following is a 438-amino-acid chain: Thymidine phosphorylase (438 aa).

Belongs to the thymidine/pyrimidine-nucleoside phosphorylase family. Homodimer.

The enzyme catalyses thymidine + phosphate = 2-deoxy-alpha-D-ribose 1-phosphate + thymine. The protein operates within pyrimidine metabolism; dTMP biosynthesis via salvage pathway; dTMP from thymine: step 1/2. Its function is as follows. The enzymes which catalyze the reversible phosphorolysis of pyrimidine nucleosides are involved in the degradation of these compounds and in their utilization as carbon and energy sources, or in the rescue of pyrimidine bases for nucleotide synthesis. The chain is Thymidine phosphorylase from Burkholderia orbicola (strain MC0-3).